Reading from the N-terminus, the 770-residue chain is Capsid protein (770 aa).

2 disordered regions span residues 645–682 (QRMQ…QKES) and 697–717 (WEDS…TQTV). Residues 646-656 (RMQQQPTTTDI) show a composition bias toward polar residues. Basic and acidic residues predominate over residues 666–681 (RDTEVYHSSQEGEQKE). Positions 703–717 (EESGSQSSEEETQTV) are enriched in low complexity.

It belongs to the anelloviridae capsid protein family.

The protein localises to the virion. In terms of biological role, self-assembles to form an icosahedral capsid with a T=1 symmetry, about 30 nm in diameter, and consisting of 60 capsid proteins. The capsid encapsulates the genomic DNA. Capsid protein is involved in attachment and entry into the host cell. This is Capsid protein from Homo sapiens (Human).